The following is a 645-amino-acid chain: 1,4-alpha-glucan branching enzyme GlgB (645 aa).

Asp309 serves as the catalytic Nucleophile. The Proton donor role is filled by Glu352. The interval 619-645 is disordered; the sequence is VKTRKGSKKQDGSKTKVRSNVTSRGKR. The segment covering 636–645 has biased composition (polar residues); the sequence is RSNVTSRGKR.

Belongs to the glycosyl hydrolase 13 family. GlgB subfamily. Monomer.

The catalysed reaction is Transfers a segment of a (1-&gt;4)-alpha-D-glucan chain to a primary hydroxy group in a similar glucan chain.. It functions in the pathway glycan biosynthesis; glycogen biosynthesis. Catalyzes the formation of the alpha-1,6-glucosidic linkages in glycogen by scission of a 1,4-alpha-linked oligosaccharide from growing alpha-1,4-glucan chains and the subsequent attachment of the oligosaccharide to the alpha-1,6 position. This Bacillus anthracis (strain CDC 684 / NRRL 3495) protein is 1,4-alpha-glucan branching enzyme GlgB.